Consider the following 131-residue polypeptide: Transcription antitermination protein NusB (131 aa).

This sequence belongs to the NusB family.

In terms of biological role, involved in transcription antitermination. Required for transcription of ribosomal RNA (rRNA) genes. Binds specifically to the boxA antiterminator sequence of the ribosomal RNA (rrn) operons. This Agathobacter rectalis (strain ATCC 33656 / DSM 3377 / JCM 17463 / KCTC 5835 / VPI 0990) (Eubacterium rectale) protein is Transcription antitermination protein NusB.